The following is a 354-amino-acid chain: Peptide chain release factor 1 (354 aa).

Gln231 carries the N5-methylglutamine modification.

Belongs to the prokaryotic/mitochondrial release factor family. Post-translationally, methylated by PrmC. Methylation increases the termination efficiency of RF1.

The protein resides in the cytoplasm. Its function is as follows. Peptide chain release factor 1 directs the termination of translation in response to the peptide chain termination codons UAG and UAA. The protein is Peptide chain release factor 1 of Acholeplasma laidlawii (strain PG-8A).